The sequence spans 89 residues: Small ribosomal subunit protein uS15 (89 aa).

This sequence belongs to the universal ribosomal protein uS15 family. Part of the 30S ribosomal subunit. Forms a bridge to the 50S subunit in the 70S ribosome, contacting the 23S rRNA.

In terms of biological role, one of the primary rRNA binding proteins, it binds directly to 16S rRNA where it helps nucleate assembly of the platform of the 30S subunit by binding and bridging several RNA helices of the 16S rRNA. Functionally, forms an intersubunit bridge (bridge B4) with the 23S rRNA of the 50S subunit in the ribosome. The chain is Small ribosomal subunit protein uS15 from Hahella chejuensis (strain KCTC 2396).